A 697-amino-acid chain; its full sequence is Polyribonucleotide nucleotidyltransferase (697 aa).

Asp-488 and Asp-494 together coordinate Mg(2+). Positions 555 to 614 constitute a KH domain; the sequence is PTFEVITINPDKIRDVIGKGGATIRQITEETKAAIDIEDNGTVRVFGETKAAAKAAIAKI. Residues 624 to 692 form the S1 motif domain; sequence GKIYDGKVIR…NRGRIKLTMK (69 aa).

It belongs to the polyribonucleotide nucleotidyltransferase family. As to quaternary structure, component of the RNA degradosome, which is a multiprotein complex involved in RNA processing and mRNA degradation. Mg(2+) serves as cofactor.

It is found in the cytoplasm. The catalysed reaction is RNA(n+1) + phosphate = RNA(n) + a ribonucleoside 5'-diphosphate. Involved in mRNA degradation. Catalyzes the phosphorolysis of single-stranded polyribonucleotides processively in the 3'- to 5'-direction. The polypeptide is Polyribonucleotide nucleotidyltransferase (Acinetobacter baumannii (strain AB307-0294)).